The chain runs to 878 residues: Alanine--tRNA ligase (878 aa).

Zn(2+)-binding residues include His566, His570, Cys668, and His672.

It belongs to the class-II aminoacyl-tRNA synthetase family. It depends on Zn(2+) as a cofactor.

The protein localises to the cytoplasm. It catalyses the reaction tRNA(Ala) + L-alanine + ATP = L-alanyl-tRNA(Ala) + AMP + diphosphate. Functionally, catalyzes the attachment of alanine to tRNA(Ala) in a two-step reaction: alanine is first activated by ATP to form Ala-AMP and then transferred to the acceptor end of tRNA(Ala). Also edits incorrectly charged Ser-tRNA(Ala) and Gly-tRNA(Ala) via its editing domain. The polypeptide is Alanine--tRNA ligase (Geobacillus thermodenitrificans (strain NG80-2)).